Reading from the N-terminus, the 47-residue chain is UPF0391 membrane protein rrnAC2507 (47 aa).

The next 2 membrane-spanning stretches (helical) occupy residues 5-25 (VVLVILAVVAGIAGFRGIAGL) and 27-47 (FRVAKFLIVIFLVLALVTFLL).

Belongs to the UPF0391 family.

The protein resides in the cell membrane. This Haloarcula marismortui (strain ATCC 43049 / DSM 3752 / JCM 8966 / VKM B-1809) (Halobacterium marismortui) protein is UPF0391 membrane protein rrnAC2507.